Reading from the N-terminus, the 356-residue chain is Anthranilate phosphoribosyltransferase (356 aa).

Residues Gly-96, 99–100 (GD), Thr-104, 106–109 (NIST), 124–132 (KHGNRSASG), and Ser-136 contribute to the 5-phospho-alpha-D-ribose 1-diphosphate site. Gly-96 contributes to the anthranilate binding site. Ser-108 is a binding site for Mg(2+). An anthranilate-binding site is contributed by Asn-127. Arg-182 is a binding site for anthranilate. Mg(2+) contacts are provided by Asp-241 and Glu-242.

It belongs to the anthranilate phosphoribosyltransferase family. As to quaternary structure, homodimer. Mg(2+) is required as a cofactor.

The catalysed reaction is N-(5-phospho-beta-D-ribosyl)anthranilate + diphosphate = 5-phospho-alpha-D-ribose 1-diphosphate + anthranilate. The protein operates within amino-acid biosynthesis; L-tryptophan biosynthesis; L-tryptophan from chorismate: step 2/5. Catalyzes the transfer of the phosphoribosyl group of 5-phosphorylribose-1-pyrophosphate (PRPP) to anthranilate to yield N-(5'-phosphoribosyl)-anthranilate (PRA). The chain is Anthranilate phosphoribosyltransferase from Trichodesmium erythraeum (strain IMS101).